The sequence spans 227 residues: Probable cell wall protein PGA42 (227 aa).

The first 16 residues, Met-1–Ala-16, serve as a signal peptide directing secretion. N-linked (GlcNAc...) asparagine glycosylation occurs at Asn-192. The GPI-anchor amidated serine moiety is linked to residue Ser-200. A propeptide spans Gly-201–Val-227 (removed in mature form).

Belongs to the IHD1 family. The GPI-anchor is attached to the protein in the endoplasmic reticulum and serves to target the protein to the cell surface. There, the glucosamine-inositol phospholipid moiety is cleaved off and the GPI-modified mannoprotein is covalently attached via its lipidless GPI glycan remnant to the 1,6-beta-glucan of the outer cell wall layer.

The protein localises to the secreted. It localises to the cell wall. It is found in the membrane. Its function is as follows. Probable GPI-anchored cell wall protein that may be involved in cell wall organization, hyphal growth, as well as in virulence. This chain is Probable cell wall protein PGA42 (PGA42), found in Candida albicans (strain SC5314 / ATCC MYA-2876) (Yeast).